Reading from the N-terminus, the 442-residue chain is PCI domain-containing protein C1105.07c (442 aa).

Positions 224–415 (VTFRYYLGRC…STLVLKKDPS (192 aa)) constitute a PCI domain.

The protein resides in the cytoplasm. Its subcellular location is the nucleus envelope. The chain is PCI domain-containing protein C1105.07c from Schizosaccharomyces pombe (strain 972 / ATCC 24843) (Fission yeast).